The sequence spans 351 residues: Photosystem II D2 protein (351 aa).

A helical transmembrane segment spans residues 39–59 (CAFLALGGWLTGTTFVTSWYT). Chlorophyll a is bound at residue His-116. The chain crosses the membrane as a helical span at residues 123-139 (GFMLRQFEIARLVGIRP). Gln-128 and Asn-141 together coordinate pheophytin a. Residues 151–164 (VFVSVFLMYPLGQS) form a helical membrane-spanning segment. Position 196 (His-196) interacts with chlorophyll a. Residues 206–226 (GALLCAIHGATVENTLFEDGE) form a helical membrane-spanning segment. 2 residues coordinate a plastoquinone: His-213 and Phe-260. Position 213 (His-213) interacts with Fe cation. Fe cation is bound at residue His-267. A helical membrane pass occupies residues 277 to 293 (GLWMSAVGIVGLALNLR).

It belongs to the reaction center PufL/M/PsbA/D family. PSII is composed of 1 copy each of membrane proteins PsbA, PsbB, PsbC, PsbD, PsbE, PsbF, PsbH, PsbI, PsbJ, PsbK, PsbL, PsbM, PsbT, PsbX, PsbY, PsbZ, Psb30/Ycf12, peripheral proteins PsbO, CyanoQ (PsbQ), PsbU, PsbV and a large number of cofactors. It forms dimeric complexes. The cofactor is The D1/D2 heterodimer binds P680, chlorophylls that are the primary electron donor of PSII, and subsequent electron acceptors. It shares a non-heme iron and each subunit binds pheophytin, quinone, additional chlorophylls, carotenoids and lipids. There is also a Cl(-1) ion associated with D1 and D2, which is required for oxygen evolution. The PSII complex binds additional chlorophylls, carotenoids and specific lipids..

The protein resides in the cellular thylakoid membrane. It catalyses the reaction 2 a plastoquinone + 4 hnu + 2 H2O = 2 a plastoquinol + O2. Its function is as follows. Photosystem II (PSII) is a light-driven water:plastoquinone oxidoreductase that uses light energy to abstract electrons from H(2)O, generating O(2) and a proton gradient subsequently used for ATP formation. It consists of a core antenna complex that captures photons, and an electron transfer chain that converts photonic excitation into a charge separation. The D1/D2 (PsbA/PsbD) reaction center heterodimer binds P680, the primary electron donor of PSII as well as several subsequent electron acceptors. D2 is needed for assembly of a stable PSII complex. The polypeptide is Photosystem II D2 protein (Trichormus variabilis (strain ATCC 29413 / PCC 7937) (Anabaena variabilis)).